A 91-amino-acid polypeptide reads, in one-letter code: Em-like protein (91 aa).

Composition is skewed to basic and acidic residues over residues 1 to 18 and 31 to 51; these read MEQQQDRRELDAKAREGE and DAQERLAEGRSRGGQTRKEQI. A disordered region spans residues 1 to 91; it reads MEQQQDRREL…PIDESKYRHP (91 aa). Gly residues predominate over residues 62 to 73; that stretch reads KGGLSSAGGPGG. Residues 75–91 are compositionally biased toward basic and acidic residues; the sequence is RASEEGRPIDESKYRHP.

Belongs to the small hydrophilic plant seed protein family.

The chain is Em-like protein from Picea glauca (White spruce).